A 240-amino-acid polypeptide reads, in one-letter code: MTRHQKRLAVPNSWPVERKTNTFTVKAGAGPHGEAGVPLVVLLRDVLGYVDSTKEARYALNNDSVLVNGDAISDEQRPIGMFDILAFPERGEFFRVFPDEGGRLALTSVDEEAAGSRLGKITNKSVVPGGDAQLTLHDGTNVLVDADTEYDTKDSIVVDNESKDVVAHFEYEEGALVTAVAGQHAGRIGEVADIDVTLGSGSNTVFVGDDEDGYETVEEYLVVIDENFTGDDADEVDSDE.

One can recognise an S4 RNA-binding domain in the interval 37–99 (VPLVVLLRDV…RGEFFRVFPD (63 aa)).

Belongs to the eukaryotic ribosomal protein eS4 family.

This Halorubrum lacusprofundi (strain ATCC 49239 / DSM 5036 / JCM 8891 / ACAM 34) protein is Small ribosomal subunit protein eS4.